The chain runs to 462 residues: Coagulation factor IX (462 aa).

The first 21 residues, 1–21 (MADAPGLIPIFLLGYLLSTEC), serve as a signal peptide directing secretion. Residues 22-39 (AVFLDRENATKILTRPKR) constitute a propeptide that is removed on maturation. Positions 40, 41, 46, 47, 54, 56, 59, 60, 65, 66, and 69 each coordinate Ca(2+). A Gla domain is found at 40 to 86 (YNSGKLEEFVQGNLERECIEERCSFEEAREVFENTEKTTEFWKQYVD). Glutamate 46, glutamate 47, glutamate 54, glutamate 56, glutamate 59, glutamate 60, glutamate 65, glutamate 66, glutamate 69, glutamate 72, and glutamate 75 each carry 4-carboxyglutamate. Glutamate 54 contacts Mg(2+). Cysteine 57 and cysteine 62 are oxidised to a cystine. Residue glutamate 59 coordinates Mg(2+). Glutamate 65 serves as a coordination point for Mg(2+). Residue glutamate 69 participates in Mg(2+) binding. Glutamate 75 lines the Ca(2+) pocket. Glutamate 75 provides a ligand contact to Mg(2+). Threonine 78 is a glycosylation site (O-linked (GalNAc...) threonine). Ca(2+) contacts are provided by glutamate 79, aspartate 86, glycine 87, and glutamine 89. The residue at position 79 (glutamate 79) is a 4-carboxyglutamate. Position 79 (glutamate 79) interacts with Mg(2+). An EGF-like; calcium-binding domain is found at 86–122 (DGDQCESNPCLNGGICKDDINSYECWCQAGFEGRNCE). Intrachain disulfides connect cysteine 90–cysteine 101, cysteine 95–cysteine 110, cysteine 112–cysteine 121, cysteine 127–cysteine 138, cysteine 134–cysteine 148, cysteine 150–cysteine 163, cysteine 171–cysteine 336, cysteine 253–cysteine 269, cysteine 383–cysteine 397, and cysteine 408–cysteine 436. An O-linked (Glc...) serine glycan is attached at serine 92. Aspartate 103 and aspartate 104 together coordinate Ca(2+). (3R)-3-hydroxyaspartate is present on aspartate 103. At serine 107 the chain carries Phosphoserine. Positions 186–227 (AETVFSNTDYGNSTELILDDITNSTILDNLTENSEPINDFTR) are cleaved as a propeptide — activation peptide. Sulfotyrosine is present on tyrosine 195. At serine 198 the chain carries Phosphoserine. Position 199 is a phosphothreonine; alternate (threonine 199). Threonine 199 carries O-linked (GalNAc...) threonine; alternate glycosylation. Residues asparagine 208 and asparagine 214 are each glycosylated (N-linked (GlcNAc...) asparagine). Threonine 216 and threonine 226 each carry an O-linked (GalNAc...) threonine glycan. A Peptidase S1 domain is found at 228–460 (VVGGENAKPG…YVNWIKEKTK (233 aa)). The Charge relay system role is filled by histidine 268. Residues glutamate 282, asparagine 284, glutamate 287, glutamate 289, and glutamate 292 each coordinate Ca(2+). An N-linked (GlcNAc...) asparagine glycan is attached at asparagine 307. The Charge relay system role is filled by aspartate 316. Catalysis depends on serine 412, which acts as the Charge relay system.

Belongs to the peptidase S1 family. In terms of assembly, heterodimer of a light chain and a heavy chain; disulfide-linked. Interacts (inactive and activated) with F11 (activated) in calcium-dependent manner. Interacts with SERPINC1. Interacts (inactive and activated) with nitrophorin-2, an anticoagulant protein from Rhodnius prolixus. Post-translationally, activated by factor XIa, which excises the activation peptide. The propeptide can also be removed by snake venom protease. Activated by coagulation factor VIIa-tissue factor (F7-F3) complex in calcium-dependent manner. In terms of processing, the iron and 2-oxoglutarate dependent 3-hydroxylation of aspartate and asparagine is (R) stereospecific within EGF domains. Predominantly O-glucosylated at Ser-92 by POGLUT1 in vitro.

The protein resides in the secreted. It catalyses the reaction Selective cleavage of Arg-|-Ile bond in factor X to form factor Xa.. Its function is as follows. Factor IX is a vitamin K-dependent plasma protein that participates in the intrinsic pathway of blood coagulation by converting factor X to its active form in the presence of Ca(2+) ions, phospholipids, and factor VIIIa. This chain is Coagulation factor IX (F9), found in Rattus norvegicus (Rat).